Here is a 331-residue protein sequence, read N- to C-terminus: Proton-translocating ferredoxin:NAD(+) oxidoreductase complex subunit D (331 aa).

3 helical membrane passes run Glu-23 to Gly-43, Val-44 to Val-64, and Ala-84 to Ile-106. FMN phosphoryl threonine is present on Thr-163. 4 helical membrane-spanning segments follow: residues Asn-196–Tyr-216, Val-226–Phe-246, Val-251–Val-271, and Ile-273–Leu-293.

Belongs to the NqrB/RnfD family. In terms of assembly, the complex is composed of six subunits: RnfA, RnfB, RnfC, RnfD, RnfE and RnfG. Requires FMN as cofactor.

It is found in the cell membrane. In terms of biological role, part of a membrane-bound complex that couples electron transfer with translocation of ions across the membrane. Couples electron transfer from reduced ferredoxin to NAD(+) with translocation of H(+) out of the cell. Essential for energy conservation during autotrophic growth. Contributes to ATP synthesis during heterotrophic growth. The sequence is that of Proton-translocating ferredoxin:NAD(+) oxidoreductase complex subunit D from Clostridium ljungdahlii (strain ATCC 55383 / DSM 13528 / PETC).